Reading from the N-terminus, the 2172-residue chain is DExH-box ATP-dependent RNA helicase DExH13 (2172 aa).

Residues 20-83 (YKVNSSLVLN…KSKKKKERCD (64 aa)) form a disordered region. Residues 30 to 73 (SDERRRDTHESSGEPESLRGRIDPKSFGDRVVRGRPHELDERLN) show a composition bias toward basic and acidic residues. A Helicase ATP-binding 1 domain is found at 515–698 (GTALFKADNI…FLRVDLKNGL (184 aa)). Residue 528–535 (APTGAGKT) participates in ATP binding. The DEIH box signature appears at 640 to 643 (DEIH). Positions 742 to 946 (GKHQVLIFVH…NAREACHWLG (205 aa)) constitute a Helicase C-terminal 1 domain. The region spanning 1007–1308 (TDLGRIASYY…KWLDSPTVLP (302 aa)) is the SEC63 1 domain. Residues 1361 to 1538 (TVLYNTSDNV…WIGASSCGVF (178 aa)) enclose the Helicase ATP-binding 2 domain. 1374 to 1381 (APTGSGKT) lines the ATP pocket. The short motif at 1480–1483 (DELH) is the DELH box element. Positions 1575–1772 (AIVQHAKNKK…NFNAEVVARV (198 aa)) constitute a Helicase C-terminal 2 domain. In terms of domain architecture, SEC63 2 spans 1840-2157 (PLNLGMIASY…YLGCDQEYSF (318 aa)).

It is found in the nucleus. It catalyses the reaction ATP + H2O = ADP + phosphate + H(+). RNA helicase that plays an essential role in pre-mRNA splicing as component of the U5 snRNP and U4/U6-U5 tri-snRNP complexes. Involved in spliceosome assembly, activation and disassembly. The sequence is that of DExH-box ATP-dependent RNA helicase DExH13 from Arabidopsis thaliana (Mouse-ear cress).